A 437-amino-acid chain; its full sequence is tRNA modification GTPase MnmE (437 aa).

3 residues coordinate (6S)-5-formyl-5,6,7,8-tetrahydrofolate: R21, E79, and R119. Residues 223-364 enclose the TrmE-type G domain; sequence GFRVVLAGPP…FRSALIAHAR (142 aa). GTP is bound by residues 233 to 238, 252 to 258, and 277 to 280; these read NAGKST, AAEPGTT, and DTAG. 2 residues coordinate Mg(2+): S237 and T258. K437 lines the (6S)-5-formyl-5,6,7,8-tetrahydrofolate pocket.

Belongs to the TRAFAC class TrmE-Era-EngA-EngB-Septin-like GTPase superfamily. TrmE GTPase family. In terms of assembly, homodimer. Heterotetramer of two MnmE and two MnmG subunits. K(+) is required as a cofactor.

The protein localises to the cytoplasm. Its function is as follows. Exhibits a very high intrinsic GTPase hydrolysis rate. Involved in the addition of a carboxymethylaminomethyl (cmnm) group at the wobble position (U34) of certain tRNAs, forming tRNA-cmnm(5)s(2)U34. The polypeptide is tRNA modification GTPase MnmE (Novosphingobium aromaticivorans (strain ATCC 700278 / DSM 12444 / CCUG 56034 / CIP 105152 / NBRC 16084 / F199)).